The following is a 294-amino-acid chain: 2-oxo-3-(phosphooxy)propyl 3-oxoalkanoate synthase (294 aa).

The protein belongs to the AfsA family.

It catalyses the reaction a medium-chain 3-oxoacyl-[ACP] + dihydroxyacetone phosphate = a (4-alkanoyl-5-oxo-2,5-dihydrofuran-3-yl)methyl phosphate + holo-[ACP] + H2O. Functionally, involved in the biosynthesis of virginiae butanolide (VB), a gamma-butyrolactone autoregulator that triggers the production of the streptogramin antibiotic virginiamycin. This is 2-oxo-3-(phosphooxy)propyl 3-oxoalkanoate synthase from Streptomyces virginiae (Streptomyces cinnamonensis).